Here is a 312-residue protein sequence, read N- to C-terminus: Ribosomal RNA small subunit methyltransferase H (312 aa).

S-adenosyl-L-methionine contacts are provided by residues 35-37 (GGH), Asp55, Phe79, Asp101, and Gln108.

It belongs to the methyltransferase superfamily. RsmH family.

It localises to the cytoplasm. It catalyses the reaction cytidine(1402) in 16S rRNA + S-adenosyl-L-methionine = N(4)-methylcytidine(1402) in 16S rRNA + S-adenosyl-L-homocysteine + H(+). Its function is as follows. Specifically methylates the N4 position of cytidine in position 1402 (C1402) of 16S rRNA. This is Ribosomal RNA small subunit methyltransferase H from Buchnera aphidicola subsp. Acyrthosiphon pisum (strain APS) (Acyrthosiphon pisum symbiotic bacterium).